Here is a 30-residue protein sequence, read N- to C-terminus: GIPCGESCVYIPCITAAIGCSCKSKVCYRN.

The cyclopeptide (Gly-Asn) cross-link spans 1–30; that stretch reads GIPCGESCVYIPCITAAIGCSCKSKVCYRN. Cystine bridges form between Cys-4/Cys-20, Cys-8/Cys-22, and Cys-13/Cys-27.

This sequence belongs to the cyclotide family. Bracelet subfamily. In terms of processing, this is a cyclic peptide.

Probably participates in a plant defense mechanism. The protein is Cyclotide mden-E of Melicytus dentatus (Tree violet).